The chain runs to 284 residues: 4-diphosphocytidyl-2-C-methyl-D-erythritol kinase (284 aa).

Residue K17 is part of the active site. 100-110 contacts ATP; sequence PMGGGLGGGSS. D142 is an active-site residue.

It belongs to the GHMP kinase family. IspE subfamily.

It carries out the reaction 4-CDP-2-C-methyl-D-erythritol + ATP = 4-CDP-2-C-methyl-D-erythritol 2-phosphate + ADP + H(+). It participates in isoprenoid biosynthesis; isopentenyl diphosphate biosynthesis via DXP pathway; isopentenyl diphosphate from 1-deoxy-D-xylulose 5-phosphate: step 3/6. Functionally, catalyzes the phosphorylation of the position 2 hydroxy group of 4-diphosphocytidyl-2C-methyl-D-erythritol. This Aromatoleum aromaticum (strain DSM 19018 / LMG 30748 / EbN1) (Azoarcus sp. (strain EbN1)) protein is 4-diphosphocytidyl-2-C-methyl-D-erythritol kinase.